The following is a 501-amino-acid chain: Ribose import ATP-binding protein RbsA (501 aa).

ABC transporter domains are found at residues 5 to 241 (LQLK…VGRK) and 252 to 495 (APGE…VGKL). An ATP-binding site is contributed by 37–44 (GENGAGKS).

This sequence belongs to the ABC transporter superfamily. Ribose importer (TC 3.A.1.2.1) family. The complex is composed of an ATP-binding protein (RbsA), two transmembrane proteins (RbsC) and a solute-binding protein (RbsB).

The protein resides in the cell inner membrane. The enzyme catalyses D-ribose(out) + ATP + H2O = D-ribose(in) + ADP + phosphate + H(+). Functionally, part of the ABC transporter complex RbsABC involved in ribose import. Responsible for energy coupling to the transport system. This Salmonella typhi protein is Ribose import ATP-binding protein RbsA.